The sequence spans 335 residues: Flagellar P-ring protein (335 aa).

The N-terminal stretch at 1-17 (MNKPMLMLITFATSLLA) is a signal peptide.

Belongs to the FlgI family. In terms of assembly, the basal body constitutes a major portion of the flagellar organelle and consists of four rings (L,P,S, and M) mounted on a central rod.

Its subcellular location is the periplasm. It is found in the bacterial flagellum basal body. Assembles around the rod to form the L-ring and probably protects the motor/basal body from shearing forces during rotation. In Borreliella burgdorferi (strain ZS7) (Borrelia burgdorferi), this protein is Flagellar P-ring protein.